Reading from the N-terminus, the 163-residue chain is UPF0763 protein CJJ81176_1011 (163 aa).

Belongs to the UPF0763 family.

The sequence is that of UPF0763 protein CJJ81176_1011 from Campylobacter jejuni subsp. jejuni serotype O:23/36 (strain 81-176).